The primary structure comprises 949 residues: Glycine dehydrogenase (decarboxylating) (949 aa).

K702 bears the N6-(pyridoxal phosphate)lysine mark.

The protein belongs to the GcvP family. The glycine cleavage system is composed of four proteins: P, T, L and H. Requires pyridoxal 5'-phosphate as cofactor.

The enzyme catalyses N(6)-[(R)-lipoyl]-L-lysyl-[glycine-cleavage complex H protein] + glycine + H(+) = N(6)-[(R)-S(8)-aminomethyldihydrolipoyl]-L-lysyl-[glycine-cleavage complex H protein] + CO2. Its function is as follows. The glycine cleavage system catalyzes the degradation of glycine. The P protein binds the alpha-amino group of glycine through its pyridoxal phosphate cofactor; CO(2) is released and the remaining methylamine moiety is then transferred to the lipoamide cofactor of the H protein. This is Glycine dehydrogenase (decarboxylating) from Rhodococcoides fascians (Rhodococcus fascians).